The primary structure comprises 883 residues: Putative GTP diphosphokinase RSH1, chloroplastic (883 aa).

A chloroplast-targeting transit peptide spans M1 to V55. Residues F172–M279 form the HD domain. The region spanning L562 to T625 is the TGS domain. Over residues Q710 to S726 the composition is skewed to polar residues. The tract at residues Q710–D746 is disordered. An ACT domain is found at W796 to S867.

Belongs to the RelA/SpoT family. As to quaternary structure, interacts with RPP5.

It is found in the plastid. The protein resides in the chloroplast. It catalyses the reaction GTP + ATP = guanosine 3'-diphosphate 5'-triphosphate + AMP. May be involved in a rapid plant ppGpp (guanosine 3'-diphosphate 5'-diphosphate)-mediated response to pathogens and other stresses. The protein is Putative GTP diphosphokinase RSH1, chloroplastic (RSH1) of Arabidopsis thaliana (Mouse-ear cress).